The chain runs to 166 residues: Large ribosomal subunit protein uL10 (166 aa).

It belongs to the universal ribosomal protein uL10 family. In terms of assembly, part of the ribosomal stalk of the 50S ribosomal subunit. The N-terminus interacts with L11 and the large rRNA to form the base of the stalk. The C-terminus forms an elongated spine to which L12 dimers bind in a sequential fashion forming a multimeric L10(L12)X complex.

Functionally, forms part of the ribosomal stalk, playing a central role in the interaction of the ribosome with GTP-bound translation factors. This is Large ribosomal subunit protein uL10 from Ectopseudomonas mendocina (strain ymp) (Pseudomonas mendocina).